A 472-amino-acid polypeptide reads, in one-letter code: CAAX prenyl protease 1 homolog (472 aa).

Topologically, residues 1 to 8 are lumenal; that stretch reads MDVGGALD. The chain crosses the membrane as a helical span at residues 9 to 29; that stretch reads LYGCSVNVYNAILIFIWVLFL. Residues 30–75 are Cytoplasmic-facing; the sequence is WETYINLRQLKVAKRVTESPEEIKCLMNDVDFDKSRRYAIDKMNFD. The chain crosses the membrane as a helical span at residues 76-96; it reads IVSGFYNILSLSAVLYFQLIA. Residues 97–124 are Lumenal-facing; it reads WAWHKSQEHMLFVCSYAPRSFGTTEGSE. The helical transmembrane segment at 125-145 threads the bilayer; that stretch reads ILFSLLFTVYVALFQFFESLP. Residues 146–175 are Cytoplasmic-facing; it reads WSYYRHFVIEERYGFNKQTIGFFIKDRLKS. A helical membrane pass occupies residues 176 to 196; sequence LAVGLVIGLPIISMLVWIIKA. Residues 197–207 are Lumenal-facing; the sequence is GGHYFYIYAYG. A helical transmembrane segment spans residues 208–228; it reads FTFVVSFIIMFIYPEFIAPIF. The Cytoplasmic portion of the chain corresponds to 229 to 340; the sequence is DRYEHFPDCE…LGHWKLKHMT (112 aa). Residue histidine 329 participates in Zn(2+) binding. Glutamate 330 is an active-site residue. A Zn(2+)-binding site is contributed by histidine 333. A helical membrane pass occupies residues 341-361; that stretch reads FNLIIAQINIFFMFFAFGQLI. The Lumenal segment spans residues 362 to 382; it reads NVDQLFVDFGFPPSTAPILIR. Residues 383–403 traverse the membrane as a helical segment; that stretch reads LIVVFQFIFMPYSSVLEFLMT. The Cytoplasmic segment spans residues 404–472; sequence MLSRKFEFQA…AIDAKMGKEK (69 aa). Residue glutamate 410 participates in Zn(2+) binding. The active-site Proton donor is aspartate 414.

It belongs to the peptidase M48A family. Homodimer; disulfide-linked. It depends on Zn(2+) as a cofactor.

The protein resides in the endoplasmic reticulum membrane. It carries out the reaction Hydrolyzes the peptide bond -P2-(S-farnesyl or geranylgeranyl)C-P1'-P2'-P3'-COOH where P1' and P2' are amino acids with aliphatic side chains and P3' is any C-terminal residue.. With respect to regulation, inhibited by ethylenediaminetetraacetic acid (EDTA) but not by serine, aspartic or cysteine protease inhibitors. Inhibited by high concentration of Zn(2+) (&gt; 0.1 mM). Its function is as follows. Zinc-dependent metalloproteinase. Proteolytically removes the C-terminal three residues of farnesylated proteins. In Taenia solium (Pork tapeworm), this protein is CAAX prenyl protease 1 homolog.